Reading from the N-terminus, the 222-residue chain is Homing endonuclease I-ApeI (222 aa).

As to quaternary structure, probably functions as a monomer. It depends on Mg(2+) as a cofactor. Mn(2+) serves as cofactor.

Its function is as follows. Endonuclease involved in 16S rRNA intron I-alpha homing. Recognizes the minimal target 5'-GCAAGGCTGAAACTTAAAGG-3'; generates 4 base 3' protruding ends 5'-AAAC-3' and 5'-GTTT-3'. This chain is Homing endonuclease I-ApeI (apeI), found in Aeropyrum pernix (strain ATCC 700893 / DSM 11879 / JCM 9820 / NBRC 100138 / K1).